The chain runs to 95 residues: Small integral membrane protein 18 (95 aa).

A helical transmembrane segment spans residues 35-55; the sequence is CFVILLLFIFTVVSLVVLAFL.

It is found in the membrane. This is Small integral membrane protein 18 (SMIM18) from Homo sapiens (Human).